We begin with the raw amino-acid sequence, 499 residues long: Tektin-like protein 1 (499 aa).

Coiled-coil stretches lie at residues 197–227 (SMLTWEKEELKSMKRKMERDMEKSEVLLKTL) and 297–317 (LNEAKRLLVESKDTLVEMAKN). Phosphotyrosine is present on Tyr372.

In terms of assembly, microtubule inner protein component of sperm flagellar doublet microtubules.

The protein resides in the cytoplasm. It is found in the cytoskeleton. The protein localises to the flagellum axoneme. Microtubule inner protein (MIP) part of the dynein-decorated doublet microtubules (DMTs) in sperm flagellar axoneme, which is required for motile flagellum beating. Forms an extensive interaction network cross-linking the lumen of axonemal doublet microtubules. The sequence is that of Tektin-like protein 1 from Homo sapiens (Human).